A 101-amino-acid chain; its full sequence is Protein S100-A3 (101 aa).

A2 carries the N-acetylalanine modification. EF-hand domains lie at 12-47 and 50-85; these read IVCT…TWTP and FREC…LCLY. Ca(2+) is bound by residues K28 and E33. A disulfide bridge connects residues C30 and C68. R51 carries the citrulline; by PAD3 modification. Ca(2+) is bound by residues D63, N65, D67, E69, and E74. A disulfide bridge connects residues C81 and C99. The Zn(2+) site is built by C83, C86, H87, and C93.

Belongs to the S-100 family. Homodimer and homotetramer for the citrullinated form. More than half of the arginine residues undergo citrullination by PAD1 and PAD2. Arg-51 is specifically citrullinated by PAD3 and promotes tetramerization. Skin specific, specifically expressed at the inner endocuticle of hair fibers.

It is found in the cytoplasm. Its function is as follows. Binds both calcium and zinc. May be involved in calcium-dependent cuticle cell differentiation, hair shaft and hair cuticular barrier formation. In Homo sapiens (Human), this protein is Protein S100-A3 (S100A3).